Here is a 606-residue protein sequence, read N- to C-terminus: Zinc finger protein 652 (606 aa).

At Ser57 the chain carries Phosphoserine. Over residues His71–Arg97 the composition is skewed to basic and acidic residues. Disordered stretches follow at residues His71 to Lys113 and Val130 to Gln235. Acidic residues predominate over residues Glu98–Glu109. Ser100 carries the phosphoserine modification. Thr103 carries the post-translational modification Phosphothreonine. Residues Val137–Thr149 show a composition bias toward polar residues. Positions Glu152–Gly170 are enriched in acidic residues. The span at Glu171–Glu183 shows a compositional bias: basic and acidic residues. The span at Lys184–Thr209 shows a compositional bias: low complexity. Ser197 and Ser204 each carry phosphoserine. A C2H2-type 1 zinc finger spans residues Leu245–His268. The C2H2-type 2; degenerate zinc finger occupies Gln272–Asp294. 6 consecutive C2H2-type zinc fingers follow at residues Ile299–His322, Phe329–His351, Phe357–His379, Phe385–His407, Phe413–His435, and Phe441–His463. The C2H2-type 9; degenerate zinc-finger motif lies at Tyr469–Phe492. The interval Val498 to His606 is mediates interaction with CBFA2T3.

Belongs to the krueppel C2H2-type zinc-finger protein family. Interacts with CBFA2T3. Widely expressed with higher expression in breast, prostate, vulva and pancreas.

The protein resides in the nucleus. Functionally, functions as a transcriptional repressor. The sequence is that of Zinc finger protein 652 (ZNF652) from Homo sapiens (Human).